The primary structure comprises 412 residues: B3 domain-containing protein Os02g0683500 (412 aa).

A disordered region spans residues 1-87 (MEFTTSSRFS…GGGGGGGGEA (87 aa)). Residues 30–65 (TATAEAAPAPTSSSSSPAHHAASASASASASGSSTP) show a composition bias toward low complexity. Residues 73–86 (GASGSGGGGGGGGE) are compositionally biased toward gly residues. Residues 96–200 (FDKVVTPSDV…RHRLFIDWKR (105 aa)) constitute a DNA-binding region (TF-B3). The interval 374-412 (RLLELPPHHHHGAESSAASSPSSSSSSKRDAHSALDLDL) is disordered. Over residues 387-399 (ESSAASSPSSSSS) the composition is skewed to low complexity. Residues 400–412 (SKRDAHSALDLDL) are compositionally biased toward basic and acidic residues.

It is found in the nucleus. In Oryza sativa subsp. japonica (Rice), this protein is B3 domain-containing protein Os02g0683500.